A 258-amino-acid polypeptide reads, in one-letter code: Imidazole glycerol phosphate synthase subunit HisF (258 aa).

Catalysis depends on residues D11 and D130.

The protein belongs to the HisA/HisF family. In terms of assembly, heterodimer of HisH and HisF.

The protein resides in the cytoplasm. The catalysed reaction is 5-[(5-phospho-1-deoxy-D-ribulos-1-ylimino)methylamino]-1-(5-phospho-beta-D-ribosyl)imidazole-4-carboxamide + L-glutamine = D-erythro-1-(imidazol-4-yl)glycerol 3-phosphate + 5-amino-1-(5-phospho-beta-D-ribosyl)imidazole-4-carboxamide + L-glutamate + H(+). It functions in the pathway amino-acid biosynthesis; L-histidine biosynthesis; L-histidine from 5-phospho-alpha-D-ribose 1-diphosphate: step 5/9. Functionally, IGPS catalyzes the conversion of PRFAR and glutamine to IGP, AICAR and glutamate. The HisF subunit catalyzes the cyclization activity that produces IGP and AICAR from PRFAR using the ammonia provided by the HisH subunit. The chain is Imidazole glycerol phosphate synthase subunit HisF from Escherichia coli (strain ATCC 8739 / DSM 1576 / NBRC 3972 / NCIMB 8545 / WDCM 00012 / Crooks).